The following is a 158-amino-acid chain: Crossover junction endodeoxyribonuclease RuvC (158 aa).

Active-site residues include aspartate 7, glutamate 66, and aspartate 139. Residues aspartate 7, glutamate 66, and aspartate 139 each contribute to the Mg(2+) site.

This sequence belongs to the RuvC family. In terms of assembly, homodimer which binds Holliday junction (HJ) DNA. The HJ becomes 2-fold symmetrical on binding to RuvC with unstacked arms; it has a different conformation from HJ DNA in complex with RuvA. In the full resolvosome a probable DNA-RuvA(4)-RuvB(12)-RuvC(2) complex forms which resolves the HJ. The cofactor is Mg(2+).

The protein localises to the cytoplasm. It carries out the reaction Endonucleolytic cleavage at a junction such as a reciprocal single-stranded crossover between two homologous DNA duplexes (Holliday junction).. Functionally, the RuvA-RuvB-RuvC complex processes Holliday junction (HJ) DNA during genetic recombination and DNA repair. Endonuclease that resolves HJ intermediates. Cleaves cruciform DNA by making single-stranded nicks across the HJ at symmetrical positions within the homologous arms, yielding a 5'-phosphate and a 3'-hydroxyl group; requires a central core of homology in the junction. The consensus cleavage sequence is 5'-(A/T)TT(C/G)-3'. Cleavage occurs on the 3'-side of the TT dinucleotide at the point of strand exchange. HJ branch migration catalyzed by RuvA-RuvB allows RuvC to scan DNA until it finds its consensus sequence, where it cleaves and resolves the cruciform DNA. This chain is Crossover junction endodeoxyribonuclease RuvC, found in Campylobacter hominis (strain ATCC BAA-381 / DSM 21671 / CCUG 45161 / LMG 19568 / NCTC 13146 / CH001A).